Consider the following 608-residue polypeptide: MAASKPVEAAVVAAAVPSSGSGVGGGGTAGPGTGGLPRWQLALAVGAPLLLGAGAIYLWSRQQRRREARGRGDASGLKRNSERKTPEGRASPAPGSGHPEGPGAHLDMNSLDRAQAAKNKGNKYFKAGKYEQAIQCYTEAISLCPTEKNVDLSTFYQNRAAAFEQLQKWKEVAQDCTKAVELNPKYVKALFRRAKAHEKLDNKKECLEDVTAVCILEGFQNQQSMLLADKVLKLLGKEKAKEKYKNREPLMPSPQFIKSYFSSFTDDIISQPMLKGEKSDEDKDKEGEALEVKENSGYLKAKQYMEEENYDKIISECSKEIDAEGKYMAEALLLRATFYLLIGNANAAKPDLDKVISLKEANVKLRANALIKRGSMYMQQQQPLLSTQDFNMAADIDPQNADVYHHRGQLKILLDQVEEAVADFDECIRLRPESALAQAQKCFALYRQAYTGNNSSQIQAAMKGFEEVIKKFPRCAEGYALYAQALTDQQQFGKADEMYDKCIDLEPDNATTYVHKGLLQLQWKQDLDRGLELISKAIEIDNKCDFAYETMGTIEVQRGNMEKAIDMFNKAINLAKSEMEMAHLYSLCDAAHAQTEVAKKYGLKPPTL.

N-acetylalanine is present on alanine 2. At 2–38 (AASKPVEAAVVAAAVPSSGSGVGGGGTAGPGTGGLPR) the chain is on the mitochondrial intermembrane side. The chain crosses the membrane as a helical span at residues 39–59 (WQLALAVGAPLLLGAGAIYLW). Residues 60 to 608 (SRQQRRREAR…KKYGLKPPTL (549 aa)) are Cytoplasmic-facing. The disordered stretch occupies residues 67–107 (EARGRGDASGLKRNSERKTPEGRASPAPGSGHPEGPGAHLD). Arginine 71 bears the Omega-N-methylarginine mark. Phosphoserine occurs at positions 91, 96, and 110. TPR repeat units follow at residues 114-147 (AQAA…CPTE) and 153-186 (STFY…NPKY). Lysine 185 is subject to N6-acetyllysine. Residue lysine 275 forms a Glycyl lysine isopeptide (Lys-Gly) (interchain with G-Cter in SUMO2) linkage. TPR repeat units lie at residues 294–327 (ENSG…EGKY), 329–362 (AEAL…KEAN), 367–400 (ANAL…DPQN), 401–434 (ADVY…RPES), 440–475 (QKCF…FPRC), 476–509 (AEGY…EPDN), 511–544 (TTYV…DNKC), and 545–578 (DFAY…AKSE). Position 434 is a phosphoserine (serine 434).

This sequence belongs to the Tom70 family. In terms of assembly, forms part of the preprotein translocase complex of the outer mitochondrial membrane (TOM complex) which consists of at least 7 different proteins (TOMM5, TOMM6, TOMM7, TOMM20, TOMM22, TOMM40 and TOMM70). Interacts with CAPN8. Interacts with TRADD, TRAF6 and STING. Interacts with MAVS; the interaction is enhanced by Sendai virus infection. Interacts with HSPA8 and HSP90AA1; both interactions are required for preprotein mitochondrial import. The interaction with HSP90AA1 is direct and mediates the association of TOMM70 with IRF3 and TBK1. Upon mitochondrial depolarization, interacts with PINK1; the interaction is required for PINK1-TOM-TIM23 supercomplex formation which is critical for PINK1 stabilization at the outer mitochondrial membrane, kinase activation and downstream mitophagy. As to quaternary structure, (Microbial infection) Interacts (via C-terminus) with SARS coronaviru/SARS-CoV and SARS coronavirus-2/SARS-CoV-2 virus protein ORF9b. (Microbial infection) Interacts with parasite T.gondii RH strain MAF1b1; the interaction impairs TOMM70 import activity, enables the parasite to associate with the host mitochondria and facilitates the association of MAF1b1 with MIB complex component SAMM50, promoting the formation of SPOTs (structures positive for outer mitochondrial membrane (OMM)); the interaction is probably indirect.

It localises to the mitochondrion outer membrane. Its function is as follows. Acts as a receptor of the preprotein translocase complex of the outer mitochondrial membrane (TOM complex). Recognizes and mediates the translocation of mitochondrial preproteins from the cytosol into the mitochondria in a chaperone dependent manner. Mediates TBK1 and IRF3 activation induced by MAVS in response to Sendai virus infection and promotes host antiviral responses during virus infection. Upon Sendai virus infection, recruits HSP90AA1:IRF3:BAX in mitochondrion and the complex induces apoptosis. The polypeptide is Mitochondrial import receptor subunit TOM70 (Homo sapiens (Human)).